Consider the following 1063-residue polypeptide: Unconventional myosin-Ic (1063 aa).

N-acetylmethionine is present on M1. One can recognise a Myosin motor domain in the interval 47 to 731; the sequence is GVQDFVLLEN…TLFATEDALE (685 aa). Residues N88, Y96, 139 to 148, and 192 to 196 contribute to the ATP site; these read SGESGAGKTE and NDNSS. K383 carries the N6-methyllysine modification. A Phosphoserine modification is found at S408. Residue K486 is modified to N6-acetyllysine. S536 carries the phosphoserine modification. Residues 608–630 are actin-binding; it reads LLELVEILKSKEPAYVRCIKPND. IQ domains follow at residues 734-757 and 758-786; these read RQSL…FLRV and KRSA…AAQT. Residues S864 and S1041 each carry the phosphoserine modification. Positions 885-1059 constitute a TH1 domain; sequence KDNYPQSVPR…NGHLAVVAPR (175 aa).

The protein belongs to the TRAFAC class myosin-kinesin ATPase superfamily. Myosin family. Interacts (via its IQ motifs) with CABP1 and CIB1; the interaction with CABP1 and CIB1 is calcium-dependent. Interacts (via tail domain) with PLEKHB1 (via PH domain); the interaction is not affected by the presence or absence of calcium and CALM. Interacts with POLR1A. Interacts with POLR2A. Component of the B-WICH complex, at least composed of SMARCA5/SNF2H, BAZ1B/WSTF, SF3B1, DEK, MYO1C, ERCC6, MYBBP1A and DDX21. Interacts (via its IQ motifs) with CALM; this precludes interaction with YWHAB. Interacts with YWHAB; this precludes interaction with CALM. Interacts with RPS6. Interacts with actin. Interacts with LLPH. Interacts with GLUT4. Interacts (via its IQ motifs) with SH3BGRL3; the interaction is dependent on calcium and takes place at membrane ruffles. Post-translationally, isoform 2 contains a N-acetylmethionine at position 1. Widely expressed.

The protein localises to the cytoplasm. Its subcellular location is the nucleus. It is found in the cell cortex. It localises to the cell projection. The protein resides in the ruffle membrane. The protein localises to the cytoplasmic vesicle. Its subcellular location is the stereocilium membrane. It is found in the nucleolus. It localises to the nucleoplasm. Myosins are actin-based motor molecules with ATPase activity. Unconventional myosins serve in intracellular movements. Their highly divergent tails are presumed to bind to membranous compartments, which would be moved relative to actin filaments. Involved in glucose transporter recycling in response to insulin by regulating movement of intracellular GLUT4-containing vesicles to the plasma membrane. Component of the hair cell's (the sensory cells of the inner ear) adaptation-motor complex. Acts as a mediator of adaptation of mechanoelectrical transduction in stereocilia of vestibular hair cells. Binds phosphoinositides and links the actin cytoskeleton to cellular membranes. Its function is as follows. Isoform 3 is involved in regulation of transcription. Associated with transcriptional active ribosomal genes. Appears to cooperate with the WICH chromatin-remodeling complex to facilitate transcription. Necessary for the formation of the first phosphodiester bond during transcription initiation. The chain is Unconventional myosin-Ic (MYO1C) from Bos taurus (Bovine).